The primary structure comprises 193 residues: Adenylate kinase (193 aa).

ATP is bound at residue 11 to 16 (GAGKGT). Residues 31–60 (STGDLLRAEVKAQTPLGCQAKVYMDAGELV) form an NMP region. AMP contacts are provided by residues Thr32, Arg37, 58 to 60 (ELV), 85 to 88 (GFPR), and Gln92. Residues 126-136 (ARGKEQGRSDD) form an LID region. An ATP-binding site is contributed by Arg127. AMP is bound by residues Arg133 and Arg145. Gln173 contacts ATP.

It belongs to the adenylate kinase family. Monomer.

The protein localises to the cytoplasm. The catalysed reaction is AMP + ATP = 2 ADP. Its pathway is purine metabolism; AMP biosynthesis via salvage pathway; AMP from ADP: step 1/1. In terms of biological role, catalyzes the reversible transfer of the terminal phosphate group between ATP and AMP. Plays an important role in cellular energy homeostasis and in adenine nucleotide metabolism. The polypeptide is Adenylate kinase (Synechococcus sp. (strain JA-2-3B'a(2-13)) (Cyanobacteria bacterium Yellowstone B-Prime)).